The chain runs to 121 residues: Large ribosomal subunit protein uL24 (121 aa).

The disordered stretch occupies residues 1 to 23; sequence MVRIESSQPRKQRKARYDAPSHM.

This sequence belongs to the universal ribosomal protein uL24 family. In terms of assembly, part of the 50S ribosomal subunit.

Its function is as follows. One of two assembly initiator proteins, it binds directly to the 5'-end of the 23S rRNA, where it nucleates assembly of the 50S subunit. Functionally, located at the polypeptide exit tunnel on the outside of the subunit. This is Large ribosomal subunit protein uL24 from Methanoregula boonei (strain DSM 21154 / JCM 14090 / 6A8).